Reading from the N-terminus, the 445-residue chain is 3-phosphoshikimate 1-carboxyvinyltransferase (445 aa).

3 residues coordinate 3-phosphoshikimate: lysine 25, serine 26, and arginine 30. Phosphoenolpyruvate is bound at residue lysine 25. 2 residues coordinate phosphoenolpyruvate: glycine 98 and arginine 126. Residues serine 171, glutamine 173, aspartate 324, and lysine 351 each contribute to the 3-phosphoshikimate site. Residue glutamine 173 coordinates phosphoenolpyruvate. Aspartate 324 functions as the Proton acceptor in the catalytic mechanism. Positions 355 and 398 each coordinate phosphoenolpyruvate.

It belongs to the EPSP synthase family. As to quaternary structure, monomer.

Its subcellular location is the cytoplasm. It catalyses the reaction 3-phosphoshikimate + phosphoenolpyruvate = 5-O-(1-carboxyvinyl)-3-phosphoshikimate + phosphate. The protein operates within metabolic intermediate biosynthesis; chorismate biosynthesis; chorismate from D-erythrose 4-phosphate and phosphoenolpyruvate: step 6/7. Catalyzes the transfer of the enolpyruvyl moiety of phosphoenolpyruvate (PEP) to the 5-hydroxyl of shikimate-3-phosphate (S3P) to produce enolpyruvyl shikimate-3-phosphate and inorganic phosphate. The polypeptide is 3-phosphoshikimate 1-carboxyvinyltransferase (Hydrogenovibrio crunogenus (strain DSM 25203 / XCL-2) (Thiomicrospira crunogena)).